The chain runs to 261 residues: Ribosomal RNA small subunit methyltransferase G (261 aa).

S-adenosyl-L-methionine-binding positions include Gly94, Leu99, 117-119 (EST), 145-146 (VE), and Arg164.

The protein belongs to the methyltransferase superfamily. RNA methyltransferase RsmG family.

Its subcellular location is the cytoplasm. Its function is as follows. Specifically methylates the N7 position of a guanine in 16S rRNA. The chain is Ribosomal RNA small subunit methyltransferase G from Rubrobacter xylanophilus (strain DSM 9941 / JCM 11954 / NBRC 16129 / PRD-1).